The sequence spans 414 residues: 3-phosphoshikimate 1-carboxyvinyltransferase (414 aa).

3-phosphoshikimate contacts are provided by K20, S21, and R25. Residue K20 coordinates phosphoenolpyruvate. Positions 85 and 113 each coordinate phosphoenolpyruvate. Positions 154, 155, 156, 181, 296, and 323 each coordinate 3-phosphoshikimate. Q156 contributes to the phosphoenolpyruvate binding site. D296 acts as the Proton acceptor in catalysis. Residues R327, R371, and K395 each coordinate phosphoenolpyruvate.

It belongs to the EPSP synthase family. Monomer.

It is found in the cytoplasm. The catalysed reaction is 3-phosphoshikimate + phosphoenolpyruvate = 5-O-(1-carboxyvinyl)-3-phosphoshikimate + phosphate. Its pathway is metabolic intermediate biosynthesis; chorismate biosynthesis. Catalyzes the transfer of the enolpyruvyl moiety of phosphoenolpyruvate (PEP) to the 5-hydroxyl of shikimate-3-phosphate (S3P) to produce enolpyruvyl shikimate-3-phosphate and inorganic phosphate. This is 3-phosphoshikimate 1-carboxyvinyltransferase from Saccharolobus islandicus (strain Y.G.57.14 / Yellowstone #1) (Sulfolobus islandicus).